Here is a 63-residue protein sequence, read N- to C-terminus: Short neurotoxin 2 (63 aa).

4 cysteine pairs are disulfide-bonded: Cys-3-Cys-21, Cys-15-Cys-39, Cys-43-Cys-49, and Cys-50-Cys-55.

This sequence belongs to the three-finger toxin family. Short-chain subfamily. Orphan group XVIII sub-subfamily. As to expression, expressed by the venom gland.

The protein resides in the secreted. Blocks both the muscle-twitch response to nerve stimulation and the response to exogenous acetylcholine. The protein is Short neurotoxin 2 of Bungarus fasciatus (Banded krait).